The chain runs to 249 residues: 3alpha-hydroxy bile acid-CoA-ester 3-dehydrogenase 1/3 (249 aa).

Residues 15–18 (TRGI), glutamate 38, glutamate 42, and asparagine 92 contribute to the NAD(+) site. Serine 144 contacts substrate. Active-site proton donor/acceptor residues include tyrosine 157 and lysine 161. NAD(+) is bound by residues lysine 161 and 190 to 192 (VDT).

It belongs to the short-chain dehydrogenases/reductases (SDR) family. In terms of assembly, homotetramer.

It catalyses the reaction a 3alpha-hydroxy bile acid CoA + NAD(+) = a 3-oxo bile acid CoA + NADH + H(+). It carries out the reaction choloyl-CoA + NAD(+) = 7alpha,12alpha-dihydroxy-3-oxochol-24-oyl-CoA + NADH + H(+). The enzyme catalyses chenodeoxycholoyl-CoA + NAD(+) = 7alpha-hydroxy-3-oxochol-24-oyl-CoA + NADH + H(+). The catalysed reaction is deoxycholoyl-CoA + NAD(+) = 12alpha-hydroxy-3-oxocholan-24-oyl-CoA + NADH + H(+). It catalyses the reaction lithocholoyl-CoA + NAD(+) = 3-oxocholan-24-oyl-CoA + NADH + H(+). Its pathway is lipid metabolism; bile acid biosynthesis. In terms of biological role, involved in the multi-step bile acid 7alpha-dehydroxylation pathway that transforms primary bile acids to secondary bile acids in the human gut. Catalyzes the oxidation of C3-hydroxyl group of CoA conjugated bile acids generating a C3-oxo bile acid intermediate. Can use choloyl-CoA, chenodeoxycholoyl-CoA, deoxycholoyl-CoA, and lithocholoyl-CoA as substrates with similar efficiency. Highly prefers NAD over NADP as cosubstrate. Also catalyzes the reverse reactions; in vitro, the preferred direction of reaction depends on the pH. Has very little activity with unconjugated (non-CoA) bile acid substrates. This is 3alpha-hydroxy bile acid-CoA-ester 3-dehydrogenase 1/3 (baiA1) from Clostridium scindens (strain JCM 10418 / VPI 12708).